A 626-amino-acid chain; its full sequence is Solute carrier family 13 member 4 (626 aa).

4 consecutive transmembrane segments (helical) span residues 13 to 33 (LLLVVCVPLLLLPLPVLHPSS), 52 to 72 (AVPLGAAALVPAFLYPFFGVL), 77 to 97 (VAAEYFKNTTLLLVGVICVAA), and 113 to 133 (VLMAGAKPGMLLLCFMCCTTL). The segment covering 217–228 (SITNPIKTANQH) has biased composition (polar residues). The disordered stretch occupies residues 217–252 (SITNPIKTANQHQGKKQHPSQEKPQVLTPSPRKQKL). 8 consecutive transmembrane segments (helical) span residues 274–294 (YSATIGGLTTIIGTSTSLIFL), 309–329 (FGTWFLFSFPISLIMLVVSWF), 372–392 (ISYPEMVTGFFFILMTVLWFT), 414–434 (ATVSVFLGFLLFLIPAKKPCF), 466–486 (IVILVGGGYALASGSKSSGLS), 499–519 (LPPWAVTLLACILVSIVTEFV), 543–563 (PLYTLIPVTMCISFAVMLPVG), and 590–610 (VIGLVIVMVAINTWGVSLFHL).

The protein belongs to the SLC13A/DASS transporter (TC 2.A.47) family. NADC subfamily. As to expression, highly expressed in placenta and testis with intermediate levels in brain and lower levels in heart, thymus and liver.

It localises to the membrane. It catalyses the reaction sulfate(out) + 3 Na(+)(out) = sulfate(in) + 3 Na(+)(in). Transport is inhibited by thiosulfate, phosphate, molybdate, selenate and tungstate. Not inhibited by oxalate, citrate, succinate, phenol red or 4,4'-diisothiocyanostilbene-2,2'-disulfonic acid (DIDS). Sodium:sulfate symporter that mediates sulfate reabsorption in the high endothelial venules (HEV). The sequence is that of Solute carrier family 13 member 4 (SLC13A4) from Homo sapiens (Human).